The chain runs to 253 residues: 5-oxoprolinase subunit A (253 aa).

This sequence belongs to the LamB/PxpA family. Forms a complex composed of PxpA, PxpB and PxpC.

It carries out the reaction 5-oxo-L-proline + ATP + 2 H2O = L-glutamate + ADP + phosphate + H(+). Catalyzes the cleavage of 5-oxoproline to form L-glutamate coupled to the hydrolysis of ATP to ADP and inorganic phosphate. The protein is 5-oxoprolinase subunit A of Bacillus cereus (strain 03BB102).